The primary structure comprises 161 residues: Probable chemoreceptor glutamine deamidase CheD (161 aa).

Belongs to the CheD family.

The enzyme catalyses L-glutaminyl-[protein] + H2O = L-glutamyl-[protein] + NH4(+). Its function is as follows. Probably deamidates glutamine residues to glutamate on methyl-accepting chemotaxis receptors (MCPs), playing an important role in chemotaxis. The protein is Probable chemoreceptor glutamine deamidase CheD of Lachnoclostridium phytofermentans (strain ATCC 700394 / DSM 18823 / ISDg) (Clostridium phytofermentans).